Reading from the N-terminus, the 424-residue chain is Galacturonokinase (424 aa).

At Ser-2 the chain carries N-acetylserine. Residue 146 to 155 (DSSGLSSSAA) coordinates ATP. The Proton acceptor role is filled by Asp-197.

It belongs to the GHMP kinase family. The cofactor is Mg(2+). Requires Mn(2+) as cofactor. Ca(2+) serves as cofactor. Expressed in roots, stems, leaves, flowers and young siliques. Higher expression in the elongating middle stem region than in the lower or upper stem region.

The enzyme catalyses D-galacturonate + ATP = 1-phospho-alpha-D-galacturonate + ADP + H(+). With respect to regulation, inhibited by EDTA and ADP. Its function is as follows. Sugar-1-kinase with a strict substrate specificity for the alpha-anomeric configuration of D-galacturonic acid (D-GalA) and ATP. Involved in the biosynthesis of UDP-galacturonic acid (UDP-GalA) from the salvaged GalA that is released during growth-dependent cell wall restructuring. This is Galacturonokinase (GALAK) from Arabidopsis thaliana (Mouse-ear cress).